The primary structure comprises 342 residues: Ribosomal RNA small subunit methyltransferase C (342 aa).

The protein belongs to the methyltransferase superfamily. RsmC family. As to quaternary structure, monomer.

Its subcellular location is the cytoplasm. The enzyme catalyses guanosine(1207) in 16S rRNA + S-adenosyl-L-methionine = N(2)-methylguanosine(1207) in 16S rRNA + S-adenosyl-L-homocysteine + H(+). Its function is as follows. Specifically methylates the guanine in position 1207 of 16S rRNA in the 30S particle. This chain is Ribosomal RNA small subunit methyltransferase C, found in Shewanella piezotolerans (strain WP3 / JCM 13877).